We begin with the raw amino-acid sequence, 194 residues long: Peptidyl-tRNA hydrolase (194 aa).

His22 acts as the Proton acceptor in catalysis. Tyr67, Asn69, and Asn115 together coordinate tRNA.

Belongs to the PTH family. As to quaternary structure, monomer.

The protein resides in the cytoplasm. It carries out the reaction an N-acyl-L-alpha-aminoacyl-tRNA + H2O = an N-acyl-L-amino acid + a tRNA + H(+). Functionally, hydrolyzes ribosome-free peptidyl-tRNAs (with 1 or more amino acids incorporated), which drop off the ribosome during protein synthesis, or as a result of ribosome stalling. Its function is as follows. Catalyzes the release of premature peptidyl moieties from peptidyl-tRNA molecules trapped in stalled 50S ribosomal subunits, and thus maintains levels of free tRNAs and 50S ribosomes. In Granulibacter bethesdensis (strain ATCC BAA-1260 / CGDNIH1), this protein is Peptidyl-tRNA hydrolase.